A 336-amino-acid chain; its full sequence is Protein YIPF3 (336 aa).

Residues 1 to 73 (MSAPGGGRSG…AGAGGEEDGE (73 aa)) are disordered. The Cytoplasmic segment spans residues 1–143 (MSAPGGGRSG…PVKMINFPQK (143 aa)). A compositionally biased stretch (acidic residues) spans 55–73 (EEEEEAEGEAGAGGEEDGE). The helical transmembrane segment at 144-164 (IAGELYGPLMLVFTLVAILLH) threads the bilayer. At 165–182 (GMKTSDTIIREGTLMGTA) the chain is on the lumenal side. A helical membrane pass occupies residues 183–203 (IGTCFGYWLGVSSFIYFLAYL). Topologically, residues 204-209 (CNAQIT) are cytoplasmic. The helical transmembrane segment at 210–230 (MVQMLSLLGYGLFGHCITLLV) threads the bilayer. Over 231–239 (TYNIHFHSL) the chain is Lumenal. A helical transmembrane segment spans residues 240-260 (FYIFWLVVGGLSTLRMVAVLV). The Cytoplasmic portion of the chain corresponds to 261 to 269 (SRTVGHTQR). A helical transmembrane segment spans residues 270–290 (LILCGTLAALHMLFLLYLHFA). Residues 291 to 336 (YHKVVEGILDTLEGPNMPPFQRVARDIPVVSNAVLNTTAKANAMTL) are Lumenal-facing. N-linked (GlcNAc...) asparagine glycosylation is present at Asn-326.

This sequence belongs to the YIP1 family.

Its subcellular location is the cell membrane. The protein localises to the golgi apparatus. The protein resides in the cis-Golgi network membrane. It is found in the cytoplasm. Its function is as follows. Involved in the maintenance of the Golgi structure. May play a role in hematopoiesis. The chain is Protein YIPF3 (YIPF3) from Gallus gallus (Chicken).